Reading from the N-terminus, the 142-residue chain is ATP synthase epsilon chain (142 aa).

Belongs to the ATPase epsilon chain family. F-type ATPases have 2 components, CF(1) - the catalytic core - and CF(0) - the membrane proton channel. CF(1) has five subunits: alpha(3), beta(3), gamma(1), delta(1), epsilon(1). CF(0) has three main subunits: a, b and c.

Its subcellular location is the cell inner membrane. In terms of biological role, produces ATP from ADP in the presence of a proton gradient across the membrane. This Shewanella baltica (strain OS155 / ATCC BAA-1091) protein is ATP synthase epsilon chain.